We begin with the raw amino-acid sequence, 275 residues long: Release factor glutamine methyltransferase (275 aa).

Residues 114 to 118 (GTGSG), Asp137, Trp165, and Asn180 contribute to the S-adenosyl-L-methionine site. 180 to 183 (NPPY) provides a ligand contact to substrate.

This sequence belongs to the protein N5-glutamine methyltransferase family. PrmC subfamily.

It catalyses the reaction L-glutaminyl-[peptide chain release factor] + S-adenosyl-L-methionine = N(5)-methyl-L-glutaminyl-[peptide chain release factor] + S-adenosyl-L-homocysteine + H(+). Functionally, methylates the class 1 translation termination release factors RF1/PrfA and RF2/PrfB on the glutamine residue of the universally conserved GGQ motif. In Xylella fastidiosa (strain 9a5c), this protein is Release factor glutamine methyltransferase.